The chain runs to 369 residues: Pyruvate dehydrogenase E1 component subunit alpha (369 aa).

As to quaternary structure, heterodimer of an alpha and a beta chain. Thiamine diphosphate is required as a cofactor.

It carries out the reaction N(6)-[(R)-lipoyl]-L-lysyl-[protein] + pyruvate + H(+) = N(6)-[(R)-S(8)-acetyldihydrolipoyl]-L-lysyl-[protein] + CO2. In terms of biological role, the pyruvate dehydrogenase complex catalyzes the overall conversion of pyruvate to acetyl-CoA and CO(2). It contains multiple copies of three enzymatic components: pyruvate dehydrogenase (E1), dihydrolipoamide acetyltransferase (E2) and lipoamide dehydrogenase (E3). This chain is Pyruvate dehydrogenase E1 component subunit alpha (pdhA), found in Geobacillus stearothermophilus (Bacillus stearothermophilus).